The chain runs to 428 residues: Glutamate-1-semialdehyde 2,1-aminomutase (428 aa).

At Lys-267 the chain carries N6-(pyridoxal phosphate)lysine.

This sequence belongs to the class-III pyridoxal-phosphate-dependent aminotransferase family. HemL subfamily. As to quaternary structure, homodimer. Pyridoxal 5'-phosphate serves as cofactor.

It is found in the cytoplasm. It catalyses the reaction (S)-4-amino-5-oxopentanoate = 5-aminolevulinate. It participates in porphyrin-containing compound metabolism; protoporphyrin-IX biosynthesis; 5-aminolevulinate from L-glutamyl-tRNA(Glu): step 2/2. The polypeptide is Glutamate-1-semialdehyde 2,1-aminomutase (Flavobacterium psychrophilum (strain ATCC 49511 / DSM 21280 / CIP 103535 / JIP02/86)).